We begin with the raw amino-acid sequence, 123 residues long: uncharacterized protein (123 aa).

This is an uncharacterized protein from Autographa californica nuclear polyhedrosis virus (AcMNPV).